Reading from the N-terminus, the 247-residue chain is UPF0309 protein lin2794 (247 aa).

In terms of domain architecture, SIS spans 31–214; that stretch reads VAESIENDGV…EKMVNDNFTP (184 aa).

It belongs to the UPF0309 family.

The chain is UPF0309 protein lin2794 from Listeria innocua serovar 6a (strain ATCC BAA-680 / CLIP 11262).